Consider the following 595-residue polypeptide: MGKKSRVKTQKSGTGATATVSPKEILNLTSELLQKCSSPAPGPGKEWEEYVQIRSLVEKIRKKQKGLSITFDGKRENYFPDLMKWASENGASVEGFEMVNFKEEGFGLRATRDIKAEELFLWVPRKLLMTVESAKNSVLGPLYSQDRILQAMGNIALAFHLLCERASPNSFWQPYIQSLPSEYDTPLYFEEDEVRYLQSTQAIHDVFSQYKNTARQYAYFYKVIQTHPHANKLPLKDSFTYEDYRWAVSSVMTRQNQIPTEDGSRVTLALIPLWDMCNHTNGLITTGYNLEDDRCECVALQDFRAGEQIYIFYGTRSNAEFVIHSGFFFDNNSHDRVKIKLGVSKSDRLYAMKAEVLARAGIPTSSVFALHFTEPPISAQLLAFLRVFCMTEEELKEHLLGDNAIDRIFTLGNSEFPVSWDNEVKLWTFLEDRASLLLKTYKTTIEEDKFVLKNHDLSVRATMAIKLRLGEKEILEKAVKSAAVNREYYRKQMEEKAPLPKYEESNLGLLESSVGDSRLPLVLRNLEEEAGVQEALNIKEAISKAEATENGLVNGENCIPNGTRSENEDLNQEENKRAVEDAKGSSSDSTDAVKK.

Positions 1–22 (MGKKSRVKTQKSGTGATATVSP) are disordered. A compositionally biased stretch (polar residues) spans 10–20 (QKSGTGATATV). Residues R75, 104 to 106 (EGF), R254, 275 to 279 (DMCNH), and 325 to 327 (SGF) contribute to the S-adenosyl-L-methionine site. Residues 94 to 314 (EGFEMVNFKE…AGEQIYIFYG (221 aa)) form the SET domain. At S513 the chain carries Phosphoserine. The disordered stretch occupies residues 552 to 595 (LVNGENCIPNGTRSENEDLNQEENKRAVEDAKGSSSDSTDAVKK). Residues 573–583 (EENKRAVEDAK) are compositionally biased toward basic and acidic residues. A compositionally biased stretch (polar residues) spans 584–595 (GSSSDSTDAVKK).

This sequence belongs to the class V-like SAM-binding methyltransferase superfamily. SETD3 actin-histidine methyltransferase family. As to quaternary structure, interacts with MYOD1. Phosphorylated by GSK3B, which is required for recognition by the SCF(FBXW7) complex and subsequent degradation. In terms of processing, ubiquitinated by the SCF(FBXW7) complex following phosphorylation by GSK3B, leading to its degradation by the proteasome.

Its subcellular location is the cytoplasm. It localises to the nucleus. The catalysed reaction is L-histidyl-[protein] + S-adenosyl-L-methionine = N(tele)-methyl-L-histidyl-[protein] + S-adenosyl-L-homocysteine + H(+). In terms of biological role, protein-histidine N-methyltransferase that specifically mediates 3-methylhistidine (tele-methylhistidine) methylation of actin at 'His-73'. Histidine methylation of actin is required for smooth muscle contraction of the laboring uterus during delivery. Does not have protein-lysine N-methyltransferase activity and probably only catalyzes histidine methylation of actin. This chain is Actin-histidine N-methyltransferase, found in Otolemur garnettii (Small-eared galago).